The following is a 716-amino-acid chain: MSVSVALKAKPIAYGAVACANYVNLSGAGSISVKYEDVALLDKQNKESNVSIQLNGSDSPVFGSKLALQTFSQVYPKLFIGENDRSLVESWVETASALAGNHNFLELSSLLAQLDDHLIMRSLFVGYSLTSADFSIWGALKSNNMAAGAVRTGQYFNLARWYKFMDSQNAVSVTMEEFTKAVNISKKQKSSGPNYEIGLPDAIDGKVVTRFPPEPSGYLHIGHAKAALLNQYFANKYHGKLIVRFDDTNPSKENSEFQDAILEDVALLGIKPDVVTYTSDYLDTIHQYCVDMIKSGQAYADDTDVETMRHERTEGIPSKHRDRPIEESLEILSEMDKGSDVGLKNCIRAKISYENPNKAMRDPVIYRCNLLPHHRTGTKYRAYPTYDFACPIVDSLEGVTHALRTTEYRDRNPLYQWMIKAMNLRKIHVWEFSRMNFVRTLLSKRKLTEIVDHGLVWGWDDPRFPTVRGVRRRGMTIEALQQYIVSQGPSKNILTLDWTSFWATNKKIIDPVAPRHTAVESGDVVKATIVNGPAAPYAEDRPRHKKNPELGNKKSIFANEILIEQADAQSFKQDEEVTLMDWGNAYVREINRDASGKVTSLKLELHLDGDFKKTEKKVTWLADTEDKTPVDLVDFDYLITKDKLEEGENYKDFLTPQTEFHSPVFADVGIKNLKKGDIIQVERKGYYIVDVPFDGTQAVLFNIPDGKTVNRYGVKN.

Ser-190 carries the post-translational modification Phosphoserine. 210–212 (RFP) lines the L-glutamate pocket. The 'HIGH' region motif lies at 215–224 (PSGYLHIGHA). His-220 contacts ATP. L-glutamate contacts are provided by residues Asp-246, 386–390 (YDFAC), and Arg-404. ATP is bound by residues Glu-407 and 441-445 (LLSKR). Residues 441–445 (LLSKR) carry the 'KMSKS' region motif.

The protein belongs to the class-I aminoacyl-tRNA synthetase family. Glutamate--tRNA ligase type 2 subfamily. Component of a yeast aminoacyl-tRNA synthase (aaRS) complex formed by methionyl-tRNA synthase, glutamyl-tRNA synthase and the tRNA aminoacylation cofactor arc1 in a stoichiometric complex. Interacts with arc1/SPAC30C2.04.

Its subcellular location is the cytoplasm. It is found in the nucleus. The catalysed reaction is tRNA(Glu) + L-glutamate + ATP = L-glutamyl-tRNA(Glu) + AMP + diphosphate. Functionally, catalyzes the attachment of glutamate to tRNA(Glu) in a two-step reaction: glutamate is first activated by ATP to form Glu-AMP and then transferred to the acceptor end of tRNA(Glu). This Schizosaccharomyces pombe (strain 972 / ATCC 24843) (Fission yeast) protein is Probable glutamate--tRNA ligase, cytoplasmic (gus1).